A 2290-amino-acid polypeptide reads, in one-letter code: Protein Ycf2 (2290 aa).

An ATP-binding site is contributed by 1638-1645 (GSIGTGRS).

Belongs to the Ycf2 family.

It localises to the plastid. Its subcellular location is the chloroplast stroma. Probable ATPase of unknown function. Its presence in a non-photosynthetic plant (Epifagus virginiana) and experiments in tobacco indicate that it has an essential function which is probably not related to photosynthesis. In Phalaenopsis aphrodite subsp. formosana (Moth orchid), this protein is Protein Ycf2.